The following is a 181-amino-acid chain: Small ribosomal subunit protein bS16 (181 aa).

The disordered stretch occupies residues 150-181; sequence KKAAEEAAKAAAEAPAEEAAPAEEAATEAAAE. Positions 158-181 are enriched in low complexity; that stretch reads KAAAEAPAEEAAPAEEAATEAAAE.

This sequence belongs to the bacterial ribosomal protein bS16 family.

This is Small ribosomal subunit protein bS16 from Bacteroides fragilis (strain ATCC 25285 / DSM 2151 / CCUG 4856 / JCM 11019 / LMG 10263 / NCTC 9343 / Onslow / VPI 2553 / EN-2).